Here is a 27-residue protein sequence, read N- to C-terminus: Histone H1.3, embryonic (27 aa).

The H15 domain maps to His1–Asn27.

This sequence belongs to the histone H1/H5 family.

It is found in the nucleus. The protein localises to the chromosome. Functionally, histones H1 are necessary for the condensation of nucleosome chains into higher-order structures. This chain is Histone H1.3, embryonic, found in Parechinus angulosus (Angulate sea urchin).